A 259-amino-acid chain; its full sequence is uncharacterized protein (259 aa).

Residues 158-187 adopt a coiled-coil conformation; sequence VELHLKIIEEDMKETTKKNKEKKQNSQSQE. The span at 172 to 181 shows a compositional bias: basic and acidic residues; sequence TTKKNKEKKQ. Disordered stretches follow at residues 172–197 and 217–240; these read TTKK…MEVS and PVKK…QLSK. Low complexity-rich tracts occupy residues 182–193 and 217–226; these read NSQSQEISNSIE and PVKKTSSASK.

This is an uncharacterized protein from Acanthamoeba polyphaga mimivirus (APMV).